Consider the following 185-residue polypeptide: Large ribosomal subunit protein uL5 (185 aa).

It belongs to the universal ribosomal protein uL5 family. In terms of assembly, part of the 50S ribosomal subunit; part of the 5S rRNA/L5/L18/L25 subcomplex. Contacts the 5S rRNA and the P site tRNA. Forms a bridge to the 30S subunit in the 70S ribosome.

This is one of the proteins that bind and probably mediate the attachment of the 5S RNA into the large ribosomal subunit, where it forms part of the central protuberance. In the 70S ribosome it contacts protein S13 of the 30S subunit (bridge B1b), connecting the 2 subunits; this bridge is implicated in subunit movement. Contacts the P site tRNA; the 5S rRNA and some of its associated proteins might help stabilize positioning of ribosome-bound tRNAs. The polypeptide is Large ribosomal subunit protein uL5 (Rhizobium etli (strain CIAT 652)).